Consider the following 374-residue polypeptide: Glyceraldehyde-3-phosphate dehydrogenase A, chloroplastic (374 aa).

Residues 1 to 34 constitute a chloroplast transit peptide; that stretch reads MAAMMQKSAFTGSAVSSKSGVRAKAARAVVDVRA. NADP(+) contacts are provided by residues 47 to 48, Asp-71, and Arg-116; that span reads RI. Cys-55 and Cys-325 are joined by a disulfide. Residues 189–191, Thr-220, Arg-235, 248–249, and Arg-271 contribute to the D-glyceraldehyde 3-phosphate site; these read SCT and TG. Cys-190 (nucleophile) is an active-site residue. Residue Asn-353 coordinates NADP(+).

Belongs to the glyceraldehyde-3-phosphate dehydrogenase family. In terms of assembly, homotetramer. Component of a complex that contains two dimers of PRK, two tetramers of GAPDH and CP12. CP12 associates with GAPDH, causing its conformation to change. This GAPDH/CP12 complex binds PRK to form a half-complex (one unit). This unit probably dimerizes due partially to interactions between the enzymes of each unit.

The protein resides in the plastid. The protein localises to the chloroplast. The enzyme catalyses D-glyceraldehyde 3-phosphate + phosphate + NADP(+) = (2R)-3-phospho-glyceroyl phosphate + NADPH + H(+). Its pathway is carbohydrate biosynthesis; Calvin cycle. This Chlamydomonas reinhardtii (Chlamydomonas smithii) protein is Glyceraldehyde-3-phosphate dehydrogenase A, chloroplastic (GAPA).